A 1003-amino-acid chain; its full sequence is Translation initiation factor IF-2 (1003 aa).

5 stretches are compositionally biased toward basic and acidic residues: residues 61 to 74, 139 to 169, 180 to 206, 219 to 229, and 252 to 290; these read EKFS…DRNK, PVVE…KKPE, LEEK…KETP, VFKIRPTEFKS, and SKEE…DKIS. 2 disordered regions span residues 61–81 and 135–362; these read EKFS…SIEG and PKAE…KDRF. The span at 315–350 shows a compositional bias: low complexity; that stretch reads NAAGTTNAGGASNNNQRNDNANRPNRNNNSKPNGNN. The 171-residue stretch at 502 to 672 folds into the tr-type G domain; it reads PRAPIVTVMG…LLEAEMLDLK (171 aa). Positions 511-518 are G1; the sequence is GHVDHGKT. Residue 511–518 coordinates GTP; sequence GHVDHGKT. Residues 536 to 540 are G2; sequence GITQH. The segment at 558 to 561 is G3; the sequence is DTPG. GTP contacts are provided by residues 558 to 562 and 612 to 615; these read DTPGH and NKVD. The G4 stretch occupies residues 612-615; that stretch reads NKVD. Positions 648-650 are G5; the sequence is SAK.

It belongs to the TRAFAC class translation factor GTPase superfamily. Classic translation factor GTPase family. IF-2 subfamily.

It localises to the cytoplasm. One of the essential components for the initiation of protein synthesis. Protects formylmethionyl-tRNA from spontaneous hydrolysis and promotes its binding to the 30S ribosomal subunits. Also involved in the hydrolysis of GTP during the formation of the 70S ribosomal complex. The protein is Translation initiation factor IF-2 of Phocaeicola vulgatus (strain ATCC 8482 / DSM 1447 / JCM 5826 / CCUG 4940 / NBRC 14291 / NCTC 11154) (Bacteroides vulgatus).